The sequence spans 234 residues: Homeobox protein ceh-51 (234 aa).

2 disordered regions span residues 128 to 154 (PPSFLHHQHQQHPRAPSEKRRGARTPF) and 209 to 234 (QIKQDAVQQQKSAKEEAEEDQKHVIS). Positions 147-206 (RRGARTPFSDSQLYALRTRFEQCDTIKVDERRKLGAVIGLSPEQIKIWFQNRRFKLRKEK) form a DNA-binding region, homeobox. The segment covering 220-234 (SAKEEAEEDQKHVIS) has biased composition (basic and acidic residues).

This sequence belongs to the NK-2 homeobox family.

It is found in the nucleus. In terms of biological role, required for mesoderm development, including specification of muscle and coelomocyte precursors. The sequence is that of Homeobox protein ceh-51 from Caenorhabditis elegans.